A 223-amino-acid chain; its full sequence is Deoxyribose-phosphate aldolase (223 aa).

D89 functions as the Proton donor/acceptor in the catalytic mechanism. K152 (schiff-base intermediate with acetaldehyde) is an active-site residue. Catalysis depends on K181, which acts as the Proton donor/acceptor.

The protein belongs to the DeoC/FbaB aldolase family. DeoC type 1 subfamily.

Its subcellular location is the cytoplasm. The catalysed reaction is 2-deoxy-D-ribose 5-phosphate = D-glyceraldehyde 3-phosphate + acetaldehyde. The protein operates within carbohydrate degradation; 2-deoxy-D-ribose 1-phosphate degradation; D-glyceraldehyde 3-phosphate and acetaldehyde from 2-deoxy-alpha-D-ribose 1-phosphate: step 2/2. Functionally, catalyzes a reversible aldol reaction between acetaldehyde and D-glyceraldehyde 3-phosphate to generate 2-deoxy-D-ribose 5-phosphate. In Bacillus cereus (strain ATCC 14579 / DSM 31 / CCUG 7414 / JCM 2152 / NBRC 15305 / NCIMB 9373 / NCTC 2599 / NRRL B-3711), this protein is Deoxyribose-phosphate aldolase.